A 328-amino-acid chain; its full sequence is D-cysteine desulfhydrase (328 aa).

Lys51 carries the N6-(pyridoxal phosphate)lysine modification.

This sequence belongs to the ACC deaminase/D-cysteine desulfhydrase family. In terms of assembly, homodimer. Requires pyridoxal 5'-phosphate as cofactor.

It carries out the reaction D-cysteine + H2O = hydrogen sulfide + pyruvate + NH4(+) + H(+). Its function is as follows. Catalyzes the alpha,beta-elimination reaction of D-cysteine and of several D-cysteine derivatives. It could be a defense mechanism against D-cysteine. The polypeptide is D-cysteine desulfhydrase (Escherichia coli (strain UTI89 / UPEC)).